The sequence spans 448 residues: RuvB-like 2 (448 aa).

73 to 80 contributes to the ATP binding site; the sequence is GEPGAGKT.

This sequence belongs to the RuvB family. Forms homohexameric rings. May form a dodecamer with ruvb-1 made of two stacked hexameric rings. In terms of tissue distribution, expressed in gonadal cells.

It localises to the cytoplasm. It is found in the nucleus. The catalysed reaction is ATP + H2O = ADP + phosphate + H(+). In terms of biological role, possesses single-stranded DNA-stimulated ATPase and ATP-dependent DNA helicase (5' to 3') activity suggesting a role in nuclear processes such as recombination and transcription. May participate in several chromatin remodeling complexes that mediate the ATP-dependent exchange of histones and remodel chromatin by shifting nucleosomes. Involvement in these complexes is likely required for transcriptional activation of selected genes and DNA repair in response to DNA damage. Has a role in gonadal development. Involved in the endoplasmic reticulum (ER)-associated degradation (ERAD) pathway where it negatively regulates expression of ER stress response genes. Specifically, negatively controls the expression of ER homeostasis regulator ckb-2 in a cdc-48.1/2-dependent manner. In Caenorhabditis elegans, this protein is RuvB-like 2.